Consider the following 607-residue polypeptide: UvrABC system protein C (607 aa).

The GIY-YIG domain maps to 11-89 (CKPGVYRFED…IKEFAPPCNV (79 aa)). In terms of domain architecture, UVR spans 201-236 (SSLLESLKKKMLKASKNKEYEEAAILRDKIQAAQTV).

Belongs to the UvrC family. In terms of assembly, interacts with UvrB in an incision complex.

The protein localises to the cytoplasm. In terms of biological role, the UvrABC repair system catalyzes the recognition and processing of DNA lesions. UvrC both incises the 5' and 3' sides of the lesion. The N-terminal half is responsible for the 3' incision and the C-terminal half is responsible for the 5' incision. This is UvrABC system protein C from Tropheryma whipplei (strain TW08/27) (Whipple's bacillus).